Reading from the N-terminus, the 146-residue chain is 3-hydroxyacyl-[acyl-carrier-protein] dehydratase FabZ (146 aa).

The active site involves H49.

Belongs to the thioester dehydratase family. FabZ subfamily.

The protein localises to the cytoplasm. It catalyses the reaction a (3R)-hydroxyacyl-[ACP] = a (2E)-enoyl-[ACP] + H2O. Its function is as follows. Involved in unsaturated fatty acids biosynthesis. Catalyzes the dehydration of short chain beta-hydroxyacyl-ACPs and long chain saturated and unsaturated beta-hydroxyacyl-ACPs. The polypeptide is 3-hydroxyacyl-[acyl-carrier-protein] dehydratase FabZ (Pseudomonas fluorescens (strain Pf0-1)).